The chain runs to 320 residues: o-succinylbenzoate synthase (320 aa).

Lys133 (proton donor) is an active-site residue. Residues Asp161, Glu190, and Asp213 each contribute to the Mg(2+) site. The active-site Proton acceptor is the Lys235.

This sequence belongs to the mandelate racemase/muconate lactonizing enzyme family. MenC type 1 subfamily. It depends on a divalent metal cation as a cofactor.

The enzyme catalyses (1R,6R)-6-hydroxy-2-succinyl-cyclohexa-2,4-diene-1-carboxylate = 2-succinylbenzoate + H2O. The protein operates within quinol/quinone metabolism; 1,4-dihydroxy-2-naphthoate biosynthesis; 1,4-dihydroxy-2-naphthoate from chorismate: step 4/7. Its pathway is quinol/quinone metabolism; menaquinone biosynthesis. Its function is as follows. Converts 2-succinyl-6-hydroxy-2,4-cyclohexadiene-1-carboxylate (SHCHC) to 2-succinylbenzoate (OSB). In Escherichia coli (strain SMS-3-5 / SECEC), this protein is o-succinylbenzoate synthase.